The following is a 63-amino-acid chain: Large ribosomal subunit protein eL24 (63 aa).

Zn(2+) contacts are provided by Cys7, Cys10, Cys33, and Cys37. The segment at 7–37 (CSFCGGSIEPGTGLMYVLRNGQILWFCSSKC) adopts a C4-type zinc-finger fold.

It belongs to the eukaryotic ribosomal protein eL24 family. In terms of assembly, part of the 50S ribosomal subunit. Forms a cluster with proteins L3 and L14. Zn(2+) serves as cofactor.

In terms of biological role, binds to the 23S rRNA. In Aeropyrum pernix (strain ATCC 700893 / DSM 11879 / JCM 9820 / NBRC 100138 / K1), this protein is Large ribosomal subunit protein eL24.